The sequence spans 79 residues: Conotoxin Leo-O4 (79 aa).

A signal peptide spans 1–22; the sequence is MKLTCMMLVAVLFLTAWTFVTA. A propeptide spanning residues 23–51 is cleaved from the precursor; the sequence is NVSRNGLENLFPEERHEMMNPNAAKLNNR. 3 disulfide bridges follow: Cys53–Cys70, Cys60–Cys74, and Cys69–Cys78.

It belongs to the conotoxin O1 superfamily. As to expression, expressed by the venom duct.

The protein localises to the secreted. In Conus leopardus (Leopard cone), this protein is Conotoxin Leo-O4.